A 593-amino-acid chain; its full sequence is Pyruvate kinase isozyme A, chloroplastic (593 aa).

The tract at residues 57–94 is disordered; that stretch reads DEPQSSPVLVSENGSGGVLSSATQEYGRNAAPGTDSSS. R144 contacts substrate. K(+)-binding residues include N146, D178, and T179. An ATP-binding site is contributed by 146–149; that stretch reads NMCH. E343 lines the Mg(2+) pocket. Substrate-binding residues include G366, D367, and S399. D367 serves as a coordination point for Mg(2+).

Belongs to the pyruvate kinase family. Mg(2+) serves as cofactor. The cofactor is K(+). Highest levels in roots. Also found in stems, leaves and flowers.

It is found in the plastid. It localises to the chloroplast. It carries out the reaction pyruvate + ATP = phosphoenolpyruvate + ADP + H(+). Its pathway is carbohydrate degradation; glycolysis; pyruvate from D-glyceraldehyde 3-phosphate: step 5/5. The sequence is that of Pyruvate kinase isozyme A, chloroplastic from Nicotiana tabacum (Common tobacco).